Here is a 647-residue protein sequence, read N- to C-terminus: Starch synthase 1, chloroplastic/amyloplastic (647 aa).

Residues 1-41 (MAATGVGAGCLAPSVRLRADPATAARASACVVRARLRRVAR) constitute a chloroplast transit peptide. A compositionally biased stretch (pro residues) spans 66-91 (PLVPGFLAPPPPAPAQSPAPTQPPLP). Residues 66 to 95 (PLVPGFLAPPPPAPAQSPAPTQPPLPDAGV) are disordered. ADP-alpha-D-glucose is bound at residue Lys-153.

This sequence belongs to the glycosyltransferase 1 family. Bacterial/plant glycogen synthase subfamily.

Its subcellular location is the plastid. It is found in the chloroplast. The protein resides in the amyloplast. It catalyses the reaction [(1-&gt;4)-alpha-D-glucosyl](n) + ADP-alpha-D-glucose = [(1-&gt;4)-alpha-D-glucosyl](n+1) + ADP + H(+). The protein operates within glycan biosynthesis; starch biosynthesis. This is Starch synthase 1, chloroplastic/amyloplastic (WSSI-2) from Triticum aestivum (Wheat).